Here is a 295-residue protein sequence, read N- to C-terminus: Ethanolamine ammonia-lyase small subunit (295 aa).

Positions 207, 228, and 258 each coordinate adenosylcob(III)alamin.

This sequence belongs to the EutC family. In terms of assembly, the basic unit is a heterodimer which dimerizes to form tetramers. The heterotetramers trimerize; 6 large subunits form a core ring with 6 small subunits projecting outwards. It depends on adenosylcob(III)alamin as a cofactor.

The protein localises to the bacterial microcompartment. It carries out the reaction ethanolamine = acetaldehyde + NH4(+). It participates in amine and polyamine degradation; ethanolamine degradation. In terms of biological role, catalyzes the deamination of various vicinal amino-alcohols to oxo compounds. Allows this organism to utilize ethanolamine as the sole source of nitrogen and carbon in the presence of external vitamin B12. The chain is Ethanolamine ammonia-lyase small subunit from Escherichia coli (strain UTI89 / UPEC).